Here is an 897-residue protein sequence, read N- to C-terminus: Interleukin enhancer-binding factor 3 (897 aa).

One can recognise a DZF domain in the interval 5-378; the sequence is RIFVNDDRHV…PMKRPMEEDG (374 aa). A disordered region spans residues 52–85; that stretch reads QEKGNSELSEAENMDTPPDDESKEGAGEQKAEHM. Positions 60-73 are enriched in acidic residues; sequence SEAENMDTPPDDES. Residue Thr-67 is modified to Phosphothreonine. Positions 74-85 are enriched in basic and acidic residues; it reads KEGAGEQKAEHM. Position 100 is an N6-acetyllysine (Lys-100). Thr-188 is modified (phosphothreonine; by PKR). The residue at position 190 (Ser-190) is a Phosphoserine. Residue Lys-297 forms a Glycyl lysine isopeptide (Lys-Gly) (interchain with G-Cter in ubiquitin) linkage. Residue Thr-315 is modified to Phosphothreonine; by PKR. Residue Lys-348 forms a Glycyl lysine isopeptide (Lys-Gly) (interchain with G-Cter in SUMO1) linkage. Residues 363–401 form a disordered region; it reads TTYAITPMKRPMEEDGEEKSPSKKKKKIQKKEEKAEPPQ. A Bipartite nuclear localization signal motif is present at residues 371 to 389; sequence KRPMEEDGEEKSPSKKKKK. Basic and acidic residues predominate over residues 372–383; it reads RPMEEDGEEKSP. Phosphoserine is present on residues Ser-382 and Ser-384. Lys-396 participates in a covalent cross-link: Glycyl lysine isopeptide (Lys-Gly) (interchain with G-Cter in SUMO2). Residues 398-467 form the DRBM 1 domain; the sequence is EPPQAMNALM…AVKVLQDMGL (70 aa). Lys-460 bears the N6-acetyllysine mark. 3 disordered regions span residues 466-524, 624-662, and 720-897; these read GLPT…LTKH, GMGG…GTNH, and GDSY…YQYR. Positions 472-481 are enriched in basic and acidic residues; it reads EGRDSSKGED. Phosphoserine is present on residues Ser-476, Ser-477, Ser-482, and Ser-486. Lys-489 is covalently cross-linked (Glycyl lysine isopeptide (Lys-Gly) (interchain with G-Cter in SUMO2)). A compositionally biased stretch (low complexity) spans 499-508; the sequence is VEAVSNPSSV. Residues 524–590 enclose the DRBM 2 domain; that stretch reads HGKNPVMELN…ALAALEKLFP (67 aa). Positions 609–897 are interaction with PRMT1; sequence RGGPKFAAKP…TEHSMNYQYR (289 aa). The span at 644–662 shows a compositional bias: gly residues; it reads RGGNIRGRGRGRGFGGTNH. 3 stretches are compositionally biased toward low complexity: residues 745–769, 783–794, and 802–812; these read SYSS…SSYG, GSYSSYSNSYNS, and DYSYDSKFNYS. Residues Ser-794, Ser-812, Ser-814, and Ser-818 each carry the phosphoserine modification. Gly residues predominate over residues 813–822; the sequence is GSGGRSGGNS. Low complexity predominate over residues 823–833; it reads YGSSGSSYNTG. Positions 834–844 are enriched in gly residues; sequence SHGGYGAGSGG. Residues 845–885 show a composition bias toward low complexity; it reads SSSYQGKQGGYSSQSNYSSPGSSQSYSGPASSYQSSQGGYS.

Identified in a IGF2BP1-dependent mRNP granule complex containing untranslated mRNAs. Interacts with FUS and SMN. Interacts (via C-terminus) with PRMT1. Forms a complex with ILF2. Can also bind to PRKDC/XRCC7: this may stabilize the interaction of PRKDC/XRCC7 and the heterodimeric complex of XRCC6/KU70 and XRCC5/KU80. Forms a heteromeric complex with ZNF346 and ILF3. Found in a nuclear export complex with XPO5, ILF3, Ran and double-stranded RNA or double-stranded minihelix VA1 RNA. Found in a nuclear export complex with XPO5, RAN, ILF3, ZNF346 and double-stranded RNA. Interacts with XPO5 and ZNF346. Forms a complex with ILF2, YLPM1, KHDRBS1, RBMX, NCOA5 and PPP1CA. Interacts with AGO1 and AGO2. Interacts with DHX36; this interaction occurs in a RNA-dependent manner. Interacts with ELAVL1; this interaction occurs in a RNA-dependent manner. Interacts with HAVCR2; this interaction promotes ILF3 ubiquitination and subsequent degradation. Post-translationally, phosphorylated at Thr-188 and Thr-315 by PKR in response to RNA viruses. This phosphorylation results in the dissociation of ILF2 from the ILF2-ILF3 complex resulting in a cytoplasmic sequestration of ILF3 where it can bind to viral RNAs and impede viral replication. In terms of processing, methylated by protein arginine N-methyltransferase 1.

It is found in the nucleus. It localises to the nucleolus. The protein localises to the cytoplasm. Functionally, RNA-binding protein that plays an essential role in the biogenesis of circular RNAs (circRNAs) which are produced by back-splicing circularization of pre-mRNAs. Within the nucleus, promotes circRNAs processing by stabilizing the regulatory elements residing in the flanking introns of the circularized exons. Plays thereby a role in the back-splicing of a subset of circRNAs. As a consequence, participates in a wide range of transcriptional and post-transcriptional processes. Binds to poly-U elements and AU-rich elements (AREs) in the 3'-UTR of target mRNAs. Upon viral infection, ILF3 accumulates in the cytoplasm and participates in the innate antiviral response. Mechanistically, ILF3 becomes phosphorylated and activated by the double-stranded RNA-activated protein kinase/PKR which releases ILF3 from cellular mature circRNAs. In turn, unbound ILF3 molecules are able to interact with and thus inhibit viral mRNAs. The polypeptide is Interleukin enhancer-binding factor 3 (Ilf3) (Rattus norvegicus (Rat)).